The following is a 215-amino-acid chain: Adenylate kinase (215 aa).

10 to 15 serves as a coordination point for ATP; the sequence is GAGKGT. Positions 30 to 59 are NMP; sequence STGDMFRAAMKNNTELGRKAKSFMDNGDLV. AMP is bound by residues Thr31, Arg36, 57–59, 85–88, and Gln92; these read DLV and GFPR. The segment at 126 to 163 is LID; the sequence is GRWICRTCGKTYHEIYNPPKVAGKCDLDGGELYQRDDD. Arg127 is a binding site for ATP. The Zn(2+) site is built by Cys130 and Cys133. Residue 136–137 participates in ATP binding; the sequence is TY. 2 residues coordinate Zn(2+): Cys150 and Asp153. Positions 160 and 171 each coordinate AMP. Residue Gln199 coordinates ATP.

This sequence belongs to the adenylate kinase family. Monomer.

Its subcellular location is the cytoplasm. The catalysed reaction is AMP + ATP = 2 ADP. Its pathway is purine metabolism; AMP biosynthesis via salvage pathway; AMP from ADP: step 1/1. In terms of biological role, catalyzes the reversible transfer of the terminal phosphate group between ATP and AMP. Plays an important role in cellular energy homeostasis and in adenine nucleotide metabolism. The polypeptide is Adenylate kinase (Listeria monocytogenes serotype 4a (strain HCC23)).